The chain runs to 293 residues: 4-hydroxy-tetrahydrodipicolinate synthase (293 aa).

Thr-47 is a pyruvate binding site. Residue Tyr-136 is the Proton donor/acceptor of the active site. Lys-164 acts as the Schiff-base intermediate with substrate in catalysis. Ile-206 serves as a coordination point for pyruvate.

This sequence belongs to the DapA family. As to quaternary structure, homotetramer; dimer of dimers.

It is found in the cytoplasm. It carries out the reaction L-aspartate 4-semialdehyde + pyruvate = (2S,4S)-4-hydroxy-2,3,4,5-tetrahydrodipicolinate + H2O + H(+). The protein operates within amino-acid biosynthesis; L-lysine biosynthesis via DAP pathway; (S)-tetrahydrodipicolinate from L-aspartate: step 3/4. Catalyzes the condensation of (S)-aspartate-beta-semialdehyde [(S)-ASA] and pyruvate to 4-hydroxy-tetrahydrodipicolinate (HTPA). The protein is 4-hydroxy-tetrahydrodipicolinate synthase of Listeria monocytogenes serovar 1/2a (strain ATCC BAA-679 / EGD-e).